The sequence spans 120 residues: Large ribosomal subunit protein uL18 (120 aa).

The protein belongs to the universal ribosomal protein uL18 family. As to quaternary structure, part of the 50S ribosomal subunit; part of the 5S rRNA/L5/L18/L25 subcomplex. Contacts the 5S and 23S rRNAs.

Functionally, this is one of the proteins that bind and probably mediate the attachment of the 5S RNA into the large ribosomal subunit, where it forms part of the central protuberance. The sequence is that of Large ribosomal subunit protein uL18 from Allorhizobium ampelinum (strain ATCC BAA-846 / DSM 112012 / S4) (Agrobacterium vitis (strain S4)).